The sequence spans 354 residues: Isopentenyl-diphosphate delta-isomerase (354 aa).

11–12 provides a ligand contact to substrate; sequence KK. FMN-binding positions include S67, 68 to 70, S98, and N126; that span reads SMT. 98–100 is a binding site for substrate; sequence SFK. Q160 contributes to the substrate binding site. Residue E161 participates in Mg(2+) binding. FMN is bound by residues K192, T222, and 289 to 290; that span reads AA.

The protein belongs to the IPP isomerase type 2 family. Homooctamer. Dimer of tetramers. The cofactor is FMN. NADPH serves as cofactor. Mg(2+) is required as a cofactor.

Its subcellular location is the cytoplasm. The enzyme catalyses isopentenyl diphosphate = dimethylallyl diphosphate. Its function is as follows. Involved in the biosynthesis of isoprenoids. Catalyzes the 1,3-allylic rearrangement of the homoallylic substrate isopentenyl (IPP) to its allylic isomer, dimethylallyl diphosphate (DMAPP). This Borreliella afzelii (strain PKo) (Borrelia afzelii) protein is Isopentenyl-diphosphate delta-isomerase.